We begin with the raw amino-acid sequence, 88 residues long: MAKGQSLQDPFLNALRRERIPVSIYLVNGIKLQGQIESFDQFVILLKNTVNQMVYKHAISTVVPARAVSHHSASDRPQGERPQEKTEE.

The 60-residue stretch at 9-68 folds into the Sm domain; that stretch reads DPFLNALRRERIPVSIYLVNGIKLQGQIESFDQFVILLKNTVNQMVYKHAISTVVPARAV. Residues 66–88 form a disordered region; the sequence is RAVSHHSASDRPQGERPQEKTEE. Over residues 72-88 the composition is skewed to basic and acidic residues; sequence SASDRPQGERPQEKTEE.

It belongs to the Hfq family. Homohexamer.

In terms of biological role, RNA chaperone that binds small regulatory RNA (sRNAs) and mRNAs to facilitate mRNA translational regulation in response to envelope stress, environmental stress and changes in metabolite concentrations. Also binds with high specificity to tRNAs. The sequence is that of RNA-binding protein Hfq from Aliivibrio fischeri (strain ATCC 700601 / ES114) (Vibrio fischeri).